The sequence spans 488 residues: Protein nucleotidyltransferase YdiU (488 aa).

ATP-binding residues include Gly-90, Gly-92, Arg-93, Lys-113, Asp-125, Gly-126, Arg-176, and Arg-183. Asp-252 serves as the catalytic Proton acceptor. 2 residues coordinate Mg(2+): Asn-253 and Asp-262. Asp-262 contacts ATP.

The protein belongs to the SELO family. Mg(2+) is required as a cofactor. Mn(2+) serves as cofactor.

It carries out the reaction L-seryl-[protein] + ATP = 3-O-(5'-adenylyl)-L-seryl-[protein] + diphosphate. It catalyses the reaction L-threonyl-[protein] + ATP = 3-O-(5'-adenylyl)-L-threonyl-[protein] + diphosphate. The catalysed reaction is L-tyrosyl-[protein] + ATP = O-(5'-adenylyl)-L-tyrosyl-[protein] + diphosphate. The enzyme catalyses L-histidyl-[protein] + UTP = N(tele)-(5'-uridylyl)-L-histidyl-[protein] + diphosphate. It carries out the reaction L-seryl-[protein] + UTP = O-(5'-uridylyl)-L-seryl-[protein] + diphosphate. It catalyses the reaction L-tyrosyl-[protein] + UTP = O-(5'-uridylyl)-L-tyrosyl-[protein] + diphosphate. Its function is as follows. Nucleotidyltransferase involved in the post-translational modification of proteins. It can catalyze the addition of adenosine monophosphate (AMP) or uridine monophosphate (UMP) to a protein, resulting in modifications known as AMPylation and UMPylation. The polypeptide is Protein nucleotidyltransferase YdiU (Thiobacillus denitrificans (strain ATCC 25259 / T1)).